Consider the following 67-residue polypeptide: Preprofallaxidin-4 (67 aa).

The N-terminal stretch at 1-22 (MASLKKFLFLVLFLGMVSLSIC) is a signal peptide. The propeptide occupies 23–46 (DKEKREGENEEEEEEHEEESEEKR). Positions 24 to 48 (KEKREGENEEEEEEHEEESEEKRGL) are disordered. A compositionally biased stretch (acidic residues) spans 30–42 (ENEEEEEEHEEES).

Belongs to the frog skin active peptide (FSAP) family. Dermaseptin subfamily. As to expression, expressed by the skin glands.

The protein resides in the secreted. This Litoria fallax (Eastern dwarf tree frog) protein is Preprofallaxidin-4.